A 244-amino-acid polypeptide reads, in one-letter code: Uridylate kinase (244 aa).

Residue 17–20 (KLSG) participates in ATP binding. G59 is a binding site for UMP. G60 and R64 together coordinate ATP. Residues D79 and 140–147 (TGNPFFTT) each bind UMP. The ATP site is built by T167, Y173, and D176.

It belongs to the UMP kinase family. In terms of assembly, homohexamer.

It localises to the cytoplasm. The catalysed reaction is UMP + ATP = UDP + ADP. The protein operates within pyrimidine metabolism; CTP biosynthesis via de novo pathway; UDP from UMP (UMPK route): step 1/1. Inhibited by UTP. In terms of biological role, catalyzes the reversible phosphorylation of UMP to UDP. This is Uridylate kinase from Hahella chejuensis (strain KCTC 2396).